The following is an 82-amino-acid chain: Delta-conotoxin-like CnVIA (82 aa).

The first 22 residues, 1-22, serve as a signal peptide directing secretion; the sequence is MKLTCMMIVAVLFLTAWTFVTA. The propeptide occupies 23-49; it reads DDSRNGLENLSPKARHEMKNPEASKSN. Intrachain disulfides connect cysteine 54–cysteine 69, cysteine 61–cysteine 73, and cysteine 68–cysteine 78.

The protein belongs to the conotoxin O1 superfamily. In terms of tissue distribution, expressed by the venom duct.

It is found in the secreted. Its function is as follows. Delta-conotoxins bind to site 6 of voltage-gated sodium channels (Nav) and inhibit the inactivation process. The sequence is that of Delta-conotoxin-like CnVIA from Conus consors (Singed cone).